The following is a 209-amino-acid chain: Small ribosomal subunit protein uS4 (209 aa).

The tract at residues 22–45 (RGRNPLLRKPNPPGQHGMQRKKKS) is disordered. The region spanning 93–154 (CRLDNIVYRL…KSRRLAIVTE (62 aa)) is the S4 RNA-binding domain.

It belongs to the universal ribosomal protein uS4 family. In terms of assembly, part of the 30S ribosomal subunit. Contacts protein S5. The interaction surface between S4 and S5 is involved in control of translational fidelity.

Its function is as follows. One of the primary rRNA binding proteins, it binds directly to 16S rRNA where it nucleates assembly of the body of the 30S subunit. In terms of biological role, with S5 and S12 plays an important role in translational accuracy. The sequence is that of Small ribosomal subunit protein uS4 from Chlamydia muridarum (strain MoPn / Nigg).